The primary structure comprises 1065 residues: Probable importin-7 homolog (1065 aa).

The 74-residue stretch at 25 to 98 (AEAQLQQIKV…KENLIDLLVH (74 aa)) folds into the Importin N-terminal domain. Residues 958 to 996 (ENGGDLGEDEGDNFDDQNDDDDQDSEEDLFEDEDTPDFE) are disordered. Positions 963–996 (LGEDEGDNFDDQNDDDDQDSEEDLFEDEDTPDFE) are enriched in acidic residues.

Belongs to the importin beta family.

It is found in the cytoplasm. Its subcellular location is the nucleus. Its function is as follows. May function in nuclear protein import. The chain is Probable importin-7 homolog from Dictyostelium discoideum (Social amoeba).